A 452-amino-acid polypeptide reads, in one-letter code: Bifunctional protein GlmU (452 aa).

The interval 1–226 is pyrophosphorylase; the sequence is MNFSAVILAA…PIEVEGVNDR (226 aa). UDP-N-acetyl-alpha-D-glucosamine is bound by residues 8 to 11, lysine 22, glutamine 73, 78 to 79, 100 to 102, glycine 137, glutamate 151, asparagine 166, and asparagine 224; these read LAAG, GT, and YGD. A Mg(2+)-binding site is contributed by aspartate 102. Asparagine 224 contacts Mg(2+). Residues 227 to 247 are linker; it reads AQLARLERAYQAAQAQKLLEQ. The interval 248-452 is N-acetyltransferase; sequence GVMLRDPSRF…IANWQRPTKK (205 aa). The UDP-N-acetyl-alpha-D-glucosamine site is built by arginine 330 and lysine 348. Histidine 360 (proton acceptor) is an active-site residue. Residues tyrosine 363 and asparagine 374 each coordinate UDP-N-acetyl-alpha-D-glucosamine. Residues alanine 377, 383–384, serine 402, alanine 420, and arginine 437 each bind acetyl-CoA; that span reads NY.

The protein in the N-terminal section; belongs to the N-acetylglucosamine-1-phosphate uridyltransferase family. It in the C-terminal section; belongs to the transferase hexapeptide repeat family. Homotrimer. Mg(2+) is required as a cofactor.

Its subcellular location is the cytoplasm. It catalyses the reaction alpha-D-glucosamine 1-phosphate + acetyl-CoA = N-acetyl-alpha-D-glucosamine 1-phosphate + CoA + H(+). It carries out the reaction N-acetyl-alpha-D-glucosamine 1-phosphate + UTP + H(+) = UDP-N-acetyl-alpha-D-glucosamine + diphosphate. The protein operates within nucleotide-sugar biosynthesis; UDP-N-acetyl-alpha-D-glucosamine biosynthesis; N-acetyl-alpha-D-glucosamine 1-phosphate from alpha-D-glucosamine 6-phosphate (route II): step 2/2. It participates in nucleotide-sugar biosynthesis; UDP-N-acetyl-alpha-D-glucosamine biosynthesis; UDP-N-acetyl-alpha-D-glucosamine from N-acetyl-alpha-D-glucosamine 1-phosphate: step 1/1. Its pathway is bacterial outer membrane biogenesis; LPS lipid A biosynthesis. Functionally, catalyzes the last two sequential reactions in the de novo biosynthetic pathway for UDP-N-acetylglucosamine (UDP-GlcNAc). The C-terminal domain catalyzes the transfer of acetyl group from acetyl coenzyme A to glucosamine-1-phosphate (GlcN-1-P) to produce N-acetylglucosamine-1-phosphate (GlcNAc-1-P), which is converted into UDP-GlcNAc by the transfer of uridine 5-monophosphate (from uridine 5-triphosphate), a reaction catalyzed by the N-terminal domain. This is Bifunctional protein GlmU from Aliivibrio fischeri (strain ATCC 700601 / ES114) (Vibrio fischeri).